The chain runs to 518 residues: ATP synthase F(1) complex catalytic subunit beta, mitochondrial (518 aa).

The ADP site is built by Gly199, Val200, Gly201, Lys202, Thr203, and Val204. An ATP-binding site is contributed by Gly199. Phosphate is bound by residues Gly199, Val200, Gly201, Lys202, and Thr203. The ATP site is built by Gly201, Lys202, Thr203, and Val204. Thr203 lines the Mg(2+) pocket. Glu228 serves as a coordination point for Mg(2+). Position 229 (Arg229) interacts with ATP.

This sequence belongs to the ATPase alpha/beta chains family. In terms of assembly, homotrimer. Component of the ATP synthase complex composed at least of ATP5F1A/subunit alpha, ATP5F1B/subunit beta, ATP5MC1/subunit c (homooctomer), MT-ATP6/subunit a, MT-ATP8/subunit 8, ATP5ME/subunit e, ATP5MF/subunit f, ATP5MG/subunit g, ATP5MK/subunit k, ATP5MJ/subunit j, ATP5F1C/subunit gamma, ATP5F1D/subunit delta, ATP5F1E/subunit epsilon, ATP5PF/subunit F6, ATP5PB/subunit b, ATP5PD/subunit d, ATP5PO/subunit OSCP. ATP synthase complex consists of a soluble F(1) head domain (subunits alpha(3) and beta(3)) - the catalytic core - and a membrane F(0) domain - the membrane proton channel (subunits c, a, 8, e, f, g, k and j). These two domains are linked by a central stalk (subunits gamma, delta, and epsilon) rotating inside the F1 region and a stationary peripheral stalk (subunits F6, b, d, and OSCP).

The protein localises to the mitochondrion inner membrane. The catalysed reaction is ATP + H2O + 4 H(+)(in) = ADP + phosphate + 5 H(+)(out). Functionally, catalytic subunit beta, of the mitochondrial membrane ATP synthase complex (F(1)F(0) ATP synthase or Complex V) that produces ATP from ADP in the presence of a proton gradient across the membrane which is generated by electron transport complexes of the respiratory chain. ATP synthase complex consist of a soluble F(1) head domain - the catalytic core - and a membrane F(1) domain - the membrane proton channel. These two domains are linked by a central stalk rotating inside the F(1) region and a stationary peripheral stalk. During catalysis, ATP synthesis in the catalytic domain of F(1) is coupled via a rotary mechanism of the central stalk subunits to proton translocation. In vivo, can only synthesize ATP although its ATP hydrolase activity can be activated artificially in vitro. With the subunit alpha (ATP5F1A), forms the catalytic core in the F(1) domain. This Cyprinus carpio (Common carp) protein is ATP synthase F(1) complex catalytic subunit beta, mitochondrial.